Consider the following 332-residue polypeptide: L-lactate dehydrogenase C chain (332 aa).

S2 is modified (blocked amino end (Ser)). NAD(+) is bound by residues 29 to 57 and R99; that span reads GNVG…DTNK. Substrate-binding residues include R106, N138, and R169. N138 contacts NAD(+). The active-site Proton acceptor is the H193. T248 provides a ligand contact to substrate.

Belongs to the LDH/MDH superfamily. LDH family. Homotetramer. Interacts with RABL2/RABL2A; binds preferentially to GTP-bound RABL2. As to expression, expressed within the midpiece of sperm tail (at protein level).

Its subcellular location is the cytoplasm. The enzyme catalyses (S)-lactate + NAD(+) = pyruvate + NADH + H(+). Its pathway is fermentation; pyruvate fermentation to lactate; (S)-lactate from pyruvate: step 1/1. Its function is as follows. Possible role in sperm motility. In Mus musculus (Mouse), this protein is L-lactate dehydrogenase C chain (Ldhc).